Consider the following 124-residue polypeptide: NADH-quinone oxidoreductase subunit A (124 aa).

The next 3 membrane-spanning stretches (helical) occupy residues 11–31 (YLPIAIFFGIATLVSSLIMIL), 68–88 (LVAILFIIFDLEITFLVPWAI), and 93–113 (IGKIGFFSMMFFLFVLTIGFV).

It belongs to the complex I subunit 3 family. NDH-1 is composed of 14 different subunits. Subunits NuoA, H, J, K, L, M, N constitute the membrane sector of the complex.

Its subcellular location is the cell inner membrane. The enzyme catalyses a quinone + NADH + 5 H(+)(in) = a quinol + NAD(+) + 4 H(+)(out). NDH-1 shuttles electrons from NADH, via FMN and iron-sulfur (Fe-S) centers, to quinones in the respiratory chain. The immediate electron acceptor for the enzyme in this species is believed to be ubiquinone. Couples the redox reaction to proton translocation (for every two electrons transferred, four hydrogen ions are translocated across the cytoplasmic membrane), and thus conserves the redox energy in a proton gradient. The protein is NADH-quinone oxidoreductase subunit A of Rickettsia bellii (strain RML369-C).